Here is a 488-residue protein sequence, read N- to C-terminus: 1-hydroxycarotenoid 3,4-desaturase (488 aa).

FAD is bound by residues glutamate 31, lysine 39, 55 to 56 (SL), valine 247, asparagine 275, leucine 431, glycine 461, and 468 to 469 (GI).

Belongs to the carotenoid/retinoid oxidoreductase family. Monomer.

It catalyses the reaction rhodopin + A = (3E)-3,4-didehydrorhodopin + AH2. It carries out the reaction 1'-hydroxy-gamma-carotene + A = 1'-hydroxytorulene + AH2. The catalysed reaction is 1-hydroxy-all-trans-1,2-dihydro-neurosporene + A = demethylspheroidene + AH2. The enzyme catalyses 1,1'-dihydroxy-1,1',2,2'-tetrahydroneurosporene + A = 1'-hydroxy-demethylspheroidene + AH2. It catalyses the reaction 1,1'-dihydroxy-1,1',2,2'-tetrahydrolycopene + A = 1,1'-dihydroxy-3,4-didehydro-1,2-dihydrolycopene + AH2. It participates in carotenoid biosynthesis. In terms of biological role, catalyzes the introduction of a C-3,4 double bond into 1'-hydroxy-gamma-carotene and rhodopin (1-hydroxylycopene) to yield 1'-hydroxytorulene and (3E)-3,4-didehydrorhodopin, respectively. Can also 1-hydroxy-all-trans-1,2-dihydro-neurosporene, 1,1'-dihydroxy-1,1',2,2'-tetrahydroneurosporene and 1,1'-dihydroxy-1,1',2,2'-tetrahydrolycopene. Probably involved in the synthesis of myxol, a gamma-carotene derivative. May use FAD as a proton acceptor. The sequence is that of 1-hydroxycarotenoid 3,4-desaturase from Flavobacterium sp. (strain P99-3).